We begin with the raw amino-acid sequence, 299 residues long: Oxygen-dependent coproporphyrinogen-III oxidase (299 aa).

S92 contacts substrate. The a divalent metal cation site is built by H96 and H106. H106 functions as the Proton donor in the catalytic mechanism. Position 108–110 (N108–R110) interacts with substrate. The a divalent metal cation site is built by H145 and H175. The interval Y240 to E275 is important for dimerization. A substrate-binding site is contributed by G258 to R260.

This sequence belongs to the aerobic coproporphyrinogen-III oxidase family. Homodimer. It depends on a divalent metal cation as a cofactor.

Its subcellular location is the cytoplasm. The catalysed reaction is coproporphyrinogen III + O2 + 2 H(+) = protoporphyrinogen IX + 2 CO2 + 2 H2O. It functions in the pathway porphyrin-containing compound metabolism; protoporphyrin-IX biosynthesis; protoporphyrinogen-IX from coproporphyrinogen-III (O2 route): step 1/1. Its function is as follows. Involved in the heme biosynthesis. Catalyzes the aerobic oxidative decarboxylation of propionate groups of rings A and B of coproporphyrinogen-III to yield the vinyl groups in protoporphyrinogen-IX. In Klebsiella pneumoniae subsp. pneumoniae (strain ATCC 700721 / MGH 78578), this protein is Oxygen-dependent coproporphyrinogen-III oxidase.